Reading from the N-terminus, the 263-residue chain is Taurine import ATP-binding protein TauB (263 aa).

The 232-residue stretch at 4-235 folds into the ABC transporter domain; it reads LTAEAISLSF…RYAAGETVRS (232 aa). ATP is bound at residue 40–47; that stretch reads GPSGCGKS.

It belongs to the ABC transporter superfamily. Taurine importer (TC 3.A.1.17.1) family. As to quaternary structure, the complex is composed of two ATP-binding proteins (TauB), two transmembrane proteins (TauC) and a solute-binding protein (TauA).

The protein resides in the cell inner membrane. It catalyses the reaction taurine(out) + ATP + H2O = taurine(in) + ADP + phosphate + H(+). In terms of biological role, part of the ABC transporter complex TauABC involved in taurine import. Responsible for energy coupling to the transport system. The polypeptide is Taurine import ATP-binding protein TauB (Pseudomonas aeruginosa (strain ATCC 15692 / DSM 22644 / CIP 104116 / JCM 14847 / LMG 12228 / 1C / PRS 101 / PAO1)).